Consider the following 107-residue polypeptide: Putative ankyrin repeat protein RP714 (107 aa).

ANK repeat units follow at residues 7-36 (PPLSPLIIAVLNGNIEYTSELLQNGVDIDV), 40-69 (NGNSALHIAASKGYTKIATMLLLYGATIDA), and 73-102 (ELATPLHYAAANNYKDLTQYLLNMNANKSA).

The protein is Putative ankyrin repeat protein RP714 of Rickettsia prowazekii (strain Madrid E).